A 29-amino-acid chain; its full sequence is Cyclotide mobo-B (29 aa).

The cyclopeptide (Gly-Asn) cross-link spans 1–29 (GKPICGETCAKGKCYTPKCTCNWPICYKN). Disulfide bonds link cysteine 5/cysteine 19, cysteine 9/cysteine 21, and cysteine 14/cysteine 26.

Belongs to the cyclotide family. This is a cyclic peptide.

Its function is as follows. Probably participates in a plant defense mechanism. In Melicytus obovatus (Hymenanthera obovata), this protein is Cyclotide mobo-B.